The following is a 366-amino-acid chain: NADH-quinone oxidoreductase subunit D (366 aa).

The protein belongs to the complex I 49 kDa subunit family. As to quaternary structure, NDH-1 is composed of 14 different subunits. Subunits NuoB, C, D, E, F, and G constitute the peripheral sector of the complex.

Its subcellular location is the cell membrane. The catalysed reaction is a quinone + NADH + 5 H(+)(in) = a quinol + NAD(+) + 4 H(+)(out). Functionally, NDH-1 shuttles electrons from NADH, via FMN and iron-sulfur (Fe-S) centers, to quinones in the respiratory chain. The immediate electron acceptor for the enzyme in this species is believed to be a menaquinone. Couples the redox reaction to proton translocation (for every two electrons transferred, four hydrogen ions are translocated across the cytoplasmic membrane), and thus conserves the redox energy in a proton gradient. The protein is NADH-quinone oxidoreductase subunit D of Bacillus cytotoxicus (strain DSM 22905 / CIP 110041 / 391-98 / NVH 391-98).